The chain runs to 284 residues: 4-hydroxybenzoate octaprenyltransferase (284 aa).

Transmembrane regions (helical) follow at residues 16–36, 40–60, 91–111, 132–152, 157–177, 206–226, 231–251, and 259–279; these read PIGI…ASDG, WTLL…GCAI, LLVA…LNTL, FFAI…PMGF, NTVP…AVAY, VAAV…VGWQ, TWFA…YTLI, and CFAA…GVVL.

This sequence belongs to the UbiA prenyltransferase family. Mg(2+) serves as cofactor.

It is found in the cell inner membrane. It carries out the reaction all-trans-octaprenyl diphosphate + 4-hydroxybenzoate = 4-hydroxy-3-(all-trans-octaprenyl)benzoate + diphosphate. It participates in cofactor biosynthesis; ubiquinone biosynthesis. Catalyzes the prenylation of para-hydroxybenzoate (PHB) with an all-trans polyprenyl group. Mediates the second step in the final reaction sequence of ubiquinone-8 (UQ-8) biosynthesis, which is the condensation of the polyisoprenoid side chain with PHB, generating the first membrane-bound Q intermediate 3-octaprenyl-4-hydroxybenzoate. The chain is 4-hydroxybenzoate octaprenyltransferase from Herminiimonas arsenicoxydans.